A 194-amino-acid chain; its full sequence is MFEYLYGTVEYKKMDYIAIDINGVGYRVYFPLREYEKIEVGNKYKLYIYNHIKEDTYKLIGFLDERDRKIFELLLKINGIGSSLALAVLSNFSYNKIIEIISKNDYTTLRQVPKLGEKKAQIIILDLKGKLKNLTYTEEETVSMDMLEDLVLALEGLGYNKKEIDKTLEKIDLNKFSSLEDAIKGILKNMRIGD.

Positions 1-63 (MFEYLYGTVE…EDTYKLIGFL (63 aa)) are domain I. The segment at 64–142 (DERDRKIFEL…NLTYTEEETV (79 aa)) is domain II. The segment at 143–147 (SMDML) is flexible linker. The interval 147 to 194 (LEDLVLALEGLGYNKKEIDKTLEKIDLNKFSSLEDAIKGILKNMRIGD) is domain III.

The protein belongs to the RuvA family. Homotetramer. Forms an RuvA(8)-RuvB(12)-Holliday junction (HJ) complex. HJ DNA is sandwiched between 2 RuvA tetramers; dsDNA enters through RuvA and exits via RuvB. An RuvB hexamer assembles on each DNA strand where it exits the tetramer. Each RuvB hexamer is contacted by two RuvA subunits (via domain III) on 2 adjacent RuvB subunits; this complex drives branch migration. In the full resolvosome a probable DNA-RuvA(4)-RuvB(12)-RuvC(2) complex forms which resolves the HJ.

The protein resides in the cytoplasm. In terms of biological role, the RuvA-RuvB-RuvC complex processes Holliday junction (HJ) DNA during genetic recombination and DNA repair, while the RuvA-RuvB complex plays an important role in the rescue of blocked DNA replication forks via replication fork reversal (RFR). RuvA specifically binds to HJ cruciform DNA, conferring on it an open structure. The RuvB hexamer acts as an ATP-dependent pump, pulling dsDNA into and through the RuvAB complex. HJ branch migration allows RuvC to scan DNA until it finds its consensus sequence, where it cleaves and resolves the cruciform DNA. The protein is Holliday junction branch migration complex subunit RuvA of Fusobacterium nucleatum subsp. nucleatum (strain ATCC 25586 / DSM 15643 / BCRC 10681 / CIP 101130 / JCM 8532 / KCTC 2640 / LMG 13131 / VPI 4355).